An 865-amino-acid polypeptide reads, in one-letter code: Bifunctional uridylyltransferase/uridylyl-removing enzyme (865 aa).

The interval Met1–Leu318 is uridylyltransferase. A uridylyl-removing region spans residues Ile319–Leu675. An HD domain is found at Val437–Leu559. 2 consecutive ACT domains span residues Gln676–His762 and Arg789–Ala865. The segment at Asp747–Arg767 is disordered. A compositionally biased stretch (basic residues) spans Ala751–Arg767.

Belongs to the GlnD family. Mg(2+) serves as cofactor.

It carries out the reaction [protein-PII]-L-tyrosine + UTP = [protein-PII]-uridylyl-L-tyrosine + diphosphate. The catalysed reaction is [protein-PII]-uridylyl-L-tyrosine + H2O = [protein-PII]-L-tyrosine + UMP + H(+). Its activity is regulated as follows. Uridylyltransferase (UTase) activity is inhibited by glutamine, while glutamine activates uridylyl-removing (UR) activity. Its function is as follows. Modifies, by uridylylation and deuridylylation, the PII regulatory proteins (GlnB and homologs), in response to the nitrogen status of the cell that GlnD senses through the glutamine level. Under low glutamine levels, catalyzes the conversion of the PII proteins and UTP to PII-UMP and PPi, while under higher glutamine levels, GlnD hydrolyzes PII-UMP to PII and UMP (deuridylylation). Thus, controls uridylylation state and activity of the PII proteins, and plays an important role in the regulation of nitrogen assimilation and metabolism. The chain is Bifunctional uridylyltransferase/uridylyl-removing enzyme from Bordetella pertussis (strain Tohama I / ATCC BAA-589 / NCTC 13251).